Here is a 160-residue protein sequence, read N- to C-terminus: Large ribosomal subunit protein eL21 (160 aa).

2 stretches are compositionally biased toward basic and acidic residues: residues 112-123 (NDQKKKEAKEKG) and 136-145 (REAHFVRTNG). Residues 112–145 (NDQKKKEAKEKGTWVQLKRQPAPPREAHFVRTNG) form a disordered region.

This sequence belongs to the eukaryotic ribosomal protein eL21 family. As to quaternary structure, component of the large ribosomal subunit.

It localises to the cytoplasm. The protein resides in the cytosol. The protein localises to the endoplasmic reticulum. Its function is as follows. Component of the large ribosomal subunit. The ribosome is a large ribonucleoprotein complex responsible for the synthesis of proteins in the cell. The chain is Large ribosomal subunit protein eL21 (RPL21) from Capra hircus (Goat).